The primary structure comprises 233 residues: LOB domain-containing protein 40 (233 aa).

The 107-residue stretch at 3 to 109 (MSCNGCRVLR…VEAVMRGSPV (107 aa)) folds into the LOB domain. Residues 143 to 160 (KRRSRGACKEERNVRSLS) show a composition bias toward basic and acidic residues. Positions 143–183 (KRRSRGACKEERNVRSLSHESSLSHESPVSSEETTTEEPKT) are disordered. Residues 161 to 175 (HESSLSHESPVSSEE) are compositionally biased toward low complexity.

This sequence belongs to the LOB domain-containing protein family. As to expression, expressed in roots and flowers.

In Arabidopsis thaliana (Mouse-ear cress), this protein is LOB domain-containing protein 40 (LBD40).